A 118-amino-acid chain; its full sequence is Putative membrane protein insertion efficiency factor (118 aa).

This sequence belongs to the UPF0161 family.

It is found in the cell inner membrane. Its function is as follows. Could be involved in insertion of integral membrane proteins into the membrane. This is Putative membrane protein insertion efficiency factor from Helicobacter pylori (strain P12).